Reading from the N-terminus, the 475-residue chain is Ribulose bisphosphate carboxylase large chain (475 aa).

Positions 1–2 are excised as a propeptide; the sequence is MS. Proline 3 is subject to N-acetylproline. Lysine 14 is modified (N6,N6,N6-trimethyllysine). Substrate contacts are provided by asparagine 123 and threonine 173. Catalysis depends on lysine 175, which acts as the Proton acceptor. Lysine 177 contacts substrate. Residues lysine 201, aspartate 203, and glutamate 204 each coordinate Mg(2+). Lysine 201 is subject to N6-carboxylysine. The active-site Proton acceptor is the histidine 294. Substrate contacts are provided by arginine 295, histidine 327, and serine 379.

It belongs to the RuBisCO large chain family. Type I subfamily. Heterohexadecamer of 8 large chains and 8 small chains. Mg(2+) is required as a cofactor.

The protein localises to the plastid. It is found in the chloroplast. The enzyme catalyses 2 (2R)-3-phosphoglycerate + 2 H(+) = D-ribulose 1,5-bisphosphate + CO2 + H2O. The catalysed reaction is D-ribulose 1,5-bisphosphate + O2 = 2-phosphoglycolate + (2R)-3-phosphoglycerate + 2 H(+). Functionally, ruBisCO catalyzes two reactions: the carboxylation of D-ribulose 1,5-bisphosphate, the primary event in carbon dioxide fixation, as well as the oxidative fragmentation of the pentose substrate in the photorespiration process. Both reactions occur simultaneously and in competition at the same active site. The polypeptide is Ribulose bisphosphate carboxylase large chain (Huperzia lucidula (Shining clubmoss)).